Reading from the N-terminus, the 184-residue chain is 3-hydroxydecanoyl-[acyl-carrier-protein] dehydratase (184 aa).

Residue His-77 is part of the active site.

It belongs to the thioester dehydratase family. FabA subfamily. As to quaternary structure, homodimer.

It localises to the cytoplasm. It catalyses the reaction a (3R)-hydroxyacyl-[ACP] = a (2E)-enoyl-[ACP] + H2O. The enzyme catalyses (3R)-hydroxydecanoyl-[ACP] = (2E)-decenoyl-[ACP] + H2O. It carries out the reaction (2E)-decenoyl-[ACP] = (3Z)-decenoyl-[ACP]. It functions in the pathway lipid metabolism; fatty acid biosynthesis. Necessary for the introduction of cis unsaturation into fatty acids. Catalyzes the dehydration of (3R)-3-hydroxydecanoyl-ACP to E-(2)-decenoyl-ACP and then its isomerization to Z-(3)-decenoyl-ACP. Can catalyze the dehydratase reaction for beta-hydroxyacyl-ACPs with saturated chain lengths up to 16:0, being most active on intermediate chain length. This chain is 3-hydroxydecanoyl-[acyl-carrier-protein] dehydratase, found in Hyphomonas neptunium (strain ATCC 15444).